The sequence spans 117 residues: Envelope glycoprotein J (117 aa).

The first 26 residues, Met1–Ala26, serve as a signal peptide directing secretion. A disordered region spans residues Ala26–Glu64. The span at Thr27–Asp40 shows a compositional bias: polar residues. The Extracellular portion of the chain corresponds to Thr27–Asp73. 3 N-linked (GlcNAc...) asparagine; by host glycosylation sites follow: Asn36, Asn46, and Asn58. A helical membrane pass occupies residues Phe74–Gly94. Over Ala95 to Ala117 the chain is Cytoplasmic.

It belongs to the alphaherpesvirinae glycoprotein J family.

It is found in the host Golgi apparatus membrane. The protein resides in the host endoplasmic reticulum membrane. It localises to the host endosome membrane. Inhibits host cell apoptosis. Induces an increase in reactive oxygen species (ROS) in the host cell. The chain is Envelope glycoprotein J (gJ) from Homo sapiens (Human).